We begin with the raw amino-acid sequence, 416 residues long: Serine hydroxymethyltransferase (416 aa).

(6S)-5,6,7,8-tetrahydrofolate contacts are provided by residues Leu121 and 125–127 (GHL). An N6-(pyridoxal phosphate)lysine modification is found at Lys229.

It belongs to the SHMT family. Homodimer. Pyridoxal 5'-phosphate is required as a cofactor.

The protein localises to the cytoplasm. The enzyme catalyses (6R)-5,10-methylene-5,6,7,8-tetrahydrofolate + glycine + H2O = (6S)-5,6,7,8-tetrahydrofolate + L-serine. It functions in the pathway one-carbon metabolism; tetrahydrofolate interconversion. The protein operates within amino-acid biosynthesis; glycine biosynthesis; glycine from L-serine: step 1/1. Catalyzes the reversible interconversion of serine and glycine with tetrahydrofolate (THF) serving as the one-carbon carrier. This reaction serves as the major source of one-carbon groups required for the biosynthesis of purines, thymidylate, methionine, and other important biomolecules. Also exhibits THF-independent aldolase activity toward beta-hydroxyamino acids, producing glycine and aldehydes, via a retro-aldol mechanism. The protein is Serine hydroxymethyltransferase of Neisseria meningitidis serogroup A / serotype 4A (strain DSM 15465 / Z2491).